The primary structure comprises 246 residues: Bis(5'-nucleosyl)-tetraphosphatase PrpE [asymmetrical] (246 aa).

This sequence belongs to the PrpE family. The cofactor is Ni(2+).

The enzyme catalyses P(1),P(4)-bis(5'-guanosyl) tetraphosphate + H2O = GMP + GTP + 2 H(+). In terms of biological role, asymmetrically hydrolyzes Ap4p to yield AMP and ATP. This is Bis(5'-nucleosyl)-tetraphosphatase PrpE [asymmetrical] from Bacillus cereus (strain AH187).